Here is a 152-residue protein sequence, read N- to C-terminus: Ribosome maturation factor RimP (152 aa).

Belongs to the RimP family.

The protein resides in the cytoplasm. In terms of biological role, required for maturation of 30S ribosomal subunits. The polypeptide is Ribosome maturation factor RimP (Idiomarina loihiensis (strain ATCC BAA-735 / DSM 15497 / L2-TR)).